We begin with the raw amino-acid sequence, 83 residues long: Large ribosomal subunit protein bL27 (83 aa).

The segment at 1-22 (MAHKKGQGSTRNGRDSHSKRLG) is disordered.

This sequence belongs to the bacterial ribosomal protein bL27 family.

The sequence is that of Large ribosomal subunit protein bL27 from Protochlamydia amoebophila (strain UWE25).